A 124-amino-acid chain; its full sequence is Large ribosomal subunit protein bL12 (124 aa).

It belongs to the bacterial ribosomal protein bL12 family. As to quaternary structure, homodimer. Part of the ribosomal stalk of the 50S ribosomal subunit. Forms a multimeric L10(L12)X complex, where L10 forms an elongated spine to which 2 to 4 L12 dimers bind in a sequential fashion. Binds GTP-bound translation factors.

Forms part of the ribosomal stalk which helps the ribosome interact with GTP-bound translation factors. Is thus essential for accurate translation. The chain is Large ribosomal subunit protein bL12 from Liberibacter africanus subsp. capensis.